The sequence spans 859 residues: Transforming growth factor-beta receptor-associated protein 1 (859 aa).

Residues 24-297 form the CNH domain; that stretch reads RGLLECVECC…HILQDFEGRV (274 aa). A CHCR repeat occupies 563–727; sequence KRPLDEQQSG…LLAVYLGPGP (165 aa).

It belongs to the TRAP1 family. In terms of assembly, interacts with TGFBR2 and ACVR2B; in the absence of ligand stimulation. Interacts with TGFBR1, ACVRL1, BMPR1A and ACVR1B; in the absence of ligand stimulation and to a less extent. Interacts with SMAD4; the interaction seems to be mutually exclusive with the interaction of SMAD4 and phosphorylated SMAD2. May interact with ALOX5. Interacts with RAB5C. Interacts with VPS8, VPS11 and VPS16. Component of the putative class C core vacuole/endosome tethering (CORVET) complex; the core of which composed of the class C Vps proteins VPS11, VPS16, VPS18 and VPS33A, is associated with VPS8 and TGFBRAP1.

The protein resides in the cytoplasm. It localises to the early endosome. Plays a role in the TGF-beta/activin signaling pathway. It associates with inactive heteromeric TGF-beta and activin receptor complexes, mainly through the type II receptor, and is released upon activation of signaling. May recruit SMAD4 to the vicinity of the receptor complex and facilitate its interaction with receptor-regulated Smads, such as SMAD2. In terms of biological role, plays a role in vesicle-mediated protein trafficking of the endocytic membrane transport pathway. Believed to act as a component of the putative CORVET endosomal tethering complexes which is proposed to be involved in the Rab5-to-Rab7 endosome conversion probably implicating MON1A/B, and via binding SNAREs and SNARE complexes to mediate tethering and docking events during SNARE-mediated membrane fusion. The CORVET complex is proposed to function as a Rab5 effector to mediate early endosome fusion probably in specific endosome subpopulations. Functions predominantly in APPL1-containing endosomes and in degradative but not recycling trafficking of endocytosed cargo. In Bos taurus (Bovine), this protein is Transforming growth factor-beta receptor-associated protein 1 (TGFBRAP1).